The chain runs to 264 residues: Thymidylate synthase (264 aa).

R21 serves as a coordination point for dUMP. H51 provides a ligand contact to (6R)-5,10-methylene-5,6,7,8-tetrahydrofolate. 126-127 (RR) contributes to the dUMP binding site. C146 serves as the catalytic Nucleophile. DUMP contacts are provided by residues 166-169 (RSAD), N177, and 207-209 (HIY). D169 serves as a coordination point for (6R)-5,10-methylene-5,6,7,8-tetrahydrofolate. A263 serves as a coordination point for (6R)-5,10-methylene-5,6,7,8-tetrahydrofolate.

The protein belongs to the thymidylate synthase family. Bacterial-type ThyA subfamily. As to quaternary structure, homodimer.

The protein localises to the cytoplasm. The catalysed reaction is dUMP + (6R)-5,10-methylene-5,6,7,8-tetrahydrofolate = 7,8-dihydrofolate + dTMP. The protein operates within pyrimidine metabolism; dTTP biosynthesis. Functionally, catalyzes the reductive methylation of 2'-deoxyuridine-5'-monophosphate (dUMP) to 2'-deoxythymidine-5'-monophosphate (dTMP) while utilizing 5,10-methylenetetrahydrofolate (mTHF) as the methyl donor and reductant in the reaction, yielding dihydrofolate (DHF) as a by-product. This enzymatic reaction provides an intracellular de novo source of dTMP, an essential precursor for DNA biosynthesis. This chain is Thymidylate synthase, found in Ruminiclostridium cellulolyticum (strain ATCC 35319 / DSM 5812 / JCM 6584 / H10) (Clostridium cellulolyticum).